The sequence spans 353 residues: Photosystem II D2 protein (353 aa).

T2 bears the N-acetylthreonine mark. T2 carries the post-translational modification Phosphothreonine. A helical transmembrane segment spans residues 41 to 61 (CAYFALGGWFTGTTFVTSWYT). A chlorophyll a-binding site is contributed by H118. Residues 125–141 (GFMLRQFELARSVQLRP) form a helical membrane-spanning segment. Pheophytin a is bound by residues Q130 and N143. The chain crosses the membrane as a helical span at residues 153–166 (VFVSVFFIYPLGQS). H198 contributes to the chlorophyll a binding site. The chain crosses the membrane as a helical span at residues 208–228 (AALLCAIHGATVENTLFEDGD). A plastoquinone is bound by residues H215 and F262. Fe cation is bound at residue H215. H269 is a Fe cation binding site. The chain crosses the membrane as a helical span at residues 279-295 (GLWMSALGVVGLALNLR).

The protein belongs to the reaction center PufL/M/PsbA/D family. As to quaternary structure, PSII is composed of 1 copy each of membrane proteins PsbA, PsbB, PsbC, PsbD, PsbE, PsbF, PsbH, PsbI, PsbJ, PsbK, PsbL, PsbM, PsbT, PsbX, PsbY, PsbZ, Psb30/Ycf12, at least 3 peripheral proteins of the oxygen-evolving complex and a large number of cofactors. It forms dimeric complexes. Requires The D1/D2 heterodimer binds P680, chlorophylls that are the primary electron donor of PSII, and subsequent electron acceptors. It shares a non-heme iron and each subunit binds pheophytin, quinone, additional chlorophylls, carotenoids and lipids. There is also a Cl(-1) ion associated with D1 and D2, which is required for oxygen evolution. The PSII complex binds additional chlorophylls, carotenoids and specific lipids. as cofactor.

The protein localises to the plastid membrane. It carries out the reaction 2 a plastoquinone + 4 hnu + 2 H2O = 2 a plastoquinol + O2. Photosystem II (PSII) is a light-driven water:plastoquinone oxidoreductase that uses light energy to abstract electrons from H(2)O, generating O(2) and a proton gradient subsequently used for ATP formation. It consists of a core antenna complex that captures photons, and an electron transfer chain that converts photonic excitation into a charge separation. The D1/D2 (PsbA/PsbD) reaction center heterodimer binds P680, the primary electron donor of PSII as well as several subsequent electron acceptors. D2 is needed for assembly of a stable PSII complex. The sequence is that of Photosystem II D2 protein from Cuscuta exaltata (Tall dodder).